The following is a 411-amino-acid chain: Arginine deiminase (411 aa).

The active-site Amidino-cysteine intermediate is the cysteine 401.

This sequence belongs to the arginine deiminase family.

It localises to the cytoplasm. It carries out the reaction L-arginine + H2O = L-citrulline + NH4(+). It participates in amino-acid degradation; L-arginine degradation via ADI pathway; carbamoyl phosphate from L-arginine: step 1/2. This is Arginine deiminase from Staphylococcus aureus (strain bovine RF122 / ET3-1).